Consider the following 271-residue polypeptide: MSRVAQLDSIALDKELYGQFWSEFNAAFNTSEHKEEWELALNTVVFMCATRFLPHYGSSCTYGSALSGVVFQCRKRTLYVVTVLAGYVWKKITHIIFNGPHCGNQMMWLKLYKWVNLLYHGCDVTNFLRFLAAEGPNARAFLSPLYRAFNVHSTRLIRDGSAIASEFYSNSVFAGLEYQNRQLLWNALLELFSNTLLTKRGLLTFVKKPPRSRSTTTYKTVCPRCGGFPTNPYQIACCRANYCYVCVVKALEWSMCDACGSSGRLTASPVY.

Residues 1–2 (MS) are Peroxisomal matrix-facing. A helical membrane pass occupies residues 3–29 (RVAQLDSIALDKELYGQFWSEFNAAFN). The Cytoplasmic portion of the chain corresponds to 30–33 (TSEH). A helical membrane pass occupies residues 34–60 (KEEWELALNTVVFMCATRFLPHYGSSC). The Peroxisomal matrix portion of the chain corresponds to 61–77 (TYGSALSGVVFQCRKRT). Residues 78–97 (LYVVTVLAGYVWKKITHIIF) traverse the membrane as a helical segment. At 98–101 (NGPH) the chain is on the cytoplasmic side. The chain crosses the membrane as a helical span at residues 102 to 133 (CGNQMMWLKLYKWVNLLYHGCDVTNFLRFLAA). Residues 134 to 175 (EGPNARAFLSPLYRAFNVHSTRLIRDGSAIASEFYSNSVFAG) are Peroxisomal matrix-facing. A helical membrane pass occupies residues 176–197 (LEYQNRQLLWNALLELFSNTLL). The Cytoplasmic portion of the chain corresponds to 198-271 (TKRGLLTFVK…SGRLTASPVY (74 aa)). Zn(2+) contacts are provided by cysteine 222, cysteine 225, cysteine 237, cysteine 238, cysteine 243, cysteine 246, cysteine 256, and cysteine 259. The segment at 222-259 (CPRCGGFPTNPYQIACCRANYCYVCVVKALEWSMCDAC) adopts an RING-type zinc-finger fold.

This sequence belongs to the pex2/pex10/pex12 family. As to quaternary structure, component of the PEX2-PEX10-PEX12 retrotranslocation channel, composed of PEX2, PEX10 and PEX12.

The protein resides in the peroxisome membrane. It catalyses the reaction [E2 ubiquitin-conjugating enzyme]-S-ubiquitinyl-L-cysteine + [acceptor protein]-L-cysteine = [E2 ubiquitin-conjugating enzyme]-L-cysteine + [acceptor protein]-S-ubiquitinyl-L-cysteine.. It functions in the pathway protein modification; protein ubiquitination. E3 ubiquitin-protein ligase component of a retrotranslocation channel required for peroxisome organization by mediating export of the PEX5 receptor from peroxisomes to the cytosol, thereby promoting PEX5 recycling. The retrotranslocation channel is composed of PEX2, PEX10 and PEX12; each subunit contributing transmembrane segments that coassemble into an open channel that specifically allows the passage of PEX5 through the peroxisomal membrane. PEX2 also regulates peroxisome organization by acting as a E3 ubiquitin-protein ligase. PEX2 ubiquitinates PEX5 during its passage through the retrotranslocation channel: catalyzes monoubiquitination of PEX5 at 'Cys-6', a modification that acts as a signal for PEX5 extraction into the cytosol. The chain is Peroxisomal biogenesis factor 2 from Saccharomyces cerevisiae (strain ATCC 204508 / S288c) (Baker's yeast).